Consider the following 170-residue polypeptide: Peptide deformylase (170 aa).

Fe cation is bound by residues cysteine 91 and histidine 133. Residue glutamate 134 is part of the active site. Histidine 137 is a Fe cation binding site.

This sequence belongs to the polypeptide deformylase family. Fe(2+) serves as cofactor.

The catalysed reaction is N-terminal N-formyl-L-methionyl-[peptide] + H2O = N-terminal L-methionyl-[peptide] + formate. Functionally, removes the formyl group from the N-terminal Met of newly synthesized proteins. Requires at least a dipeptide for an efficient rate of reaction. N-terminal L-methionine is a prerequisite for activity but the enzyme has broad specificity at other positions. The sequence is that of Peptide deformylase from Actinobacillus pleuropneumoniae serotype 7 (strain AP76).